Here is a 429-residue protein sequence, read N- to C-terminus: Cleavage stimulation factor subunit 50 (429 aa).

Residues 20–41 form a hydrophobic region; the sequence is LNALIVAHLRHHNLSQVASAVA. WD repeat units follow at residues 121–160, 174–213, 218–257, 264–303, 308–347, 351–392, and 396–429; these read EHKSVVRCARFSPDGMFFATGGADTSIKLFEVPKVKQMIS, DHAEPINDLDFHPRSTILISSAKDNCIKFFDFSKTTAKRA, QDTHNVRSISFHPSGEFLLAGTDHPIPHLYDVNTYQCFLP, GVSGAINQVRYSSTGSIYITASKDGAIRLFDGVSAKCVRS, HGKSEVTSAVFTKDQRFVLSSGKDSTVKLWEIGSGRMVKE, AKRV…KVAK, and NHNGAPRWIEHSPVESVFVTCGIDRSIRFWKESV.

Homodimer. Belongs to the CSTF complex. Forms a complex with cleavage and polyadenylation specificity factor (CPSF) subunits CSTF64, PABN3, CPSF30, FIPS5 and CPSF100.

It localises to the nucleus. Its function is as follows. One of the multiple factors required for polyadenylation and 3'-end cleavage of pre-mRNAs. May be responsible for the interaction of CSTF with other factors to form a stable complex on the pre-mRNA. This is Cleavage stimulation factor subunit 50 from Arabidopsis thaliana (Mouse-ear cress).